The chain runs to 205 residues: Small ribosomal subunit protein uS4 (205 aa).

Residues 18-46 (NIWGRSKSPVNRREYGPGQHGQRRKGKLS) are disordered. One can recognise an S4 RNA-binding domain in the interval 94-157 (RRLDAVVYRA…RQMTLVLEAQ (64 aa)).

This sequence belongs to the universal ribosomal protein uS4 family. Part of the 30S ribosomal subunit. Contacts protein S5. The interaction surface between S4 and S5 is involved in control of translational fidelity.

Its function is as follows. One of the primary rRNA binding proteins, it binds directly to 16S rRNA where it nucleates assembly of the body of the 30S subunit. In terms of biological role, with S5 and S12 plays an important role in translational accuracy. The chain is Small ribosomal subunit protein uS4 from Xanthobacter autotrophicus (strain ATCC BAA-1158 / Py2).